Here is a 427-residue protein sequence, read N- to C-terminus: Glutamate-1-semialdehyde 2,1-aminomutase (427 aa).

At lysine 265 the chain carries N6-(pyridoxal phosphate)lysine.

This sequence belongs to the class-III pyridoxal-phosphate-dependent aminotransferase family. HemL subfamily. Homodimer. It depends on pyridoxal 5'-phosphate as a cofactor.

The protein localises to the cytoplasm. The catalysed reaction is (S)-4-amino-5-oxopentanoate = 5-aminolevulinate. It participates in porphyrin-containing compound metabolism; protoporphyrin-IX biosynthesis; 5-aminolevulinate from L-glutamyl-tRNA(Glu): step 2/2. The protein is Glutamate-1-semialdehyde 2,1-aminomutase of Bordetella petrii (strain ATCC BAA-461 / DSM 12804 / CCUG 43448).